A 232-amino-acid chain; its full sequence is Large ribosomal subunit protein uL1 (232 aa).

This sequence belongs to the universal ribosomal protein uL1 family. In terms of assembly, part of the 50S ribosomal subunit.

In terms of biological role, binds directly to 23S rRNA. The L1 stalk is quite mobile in the ribosome, and is involved in E site tRNA release. Its function is as follows. Protein L1 is also a translational repressor protein, it controls the translation of the L11 operon by binding to its mRNA. The chain is Large ribosomal subunit protein uL1 from Cutibacterium acnes (strain DSM 16379 / KPA171202) (Propionibacterium acnes).